The primary structure comprises 477 residues: Transmembrane and coiled-coil domain protein 3 (477 aa).

The interval Met-1–Lys-24 is disordered. The residue at position 46 (Ser-46) is a Phosphoserine. Coiled-coil stretches lie at residues Lys-63 to Lys-83 and Lys-112 to Thr-149. Residues Ala-234–Thr-280 form a disordered region. Ser-253 carries the phosphoserine modification. Positions Ser-258–Thr-280 are enriched in polar residues. Residues Gln-284 to Gln-398 are a coiled coil. 2 consecutive transmembrane segments (helical) span residues Val-409 to Val-429 and Phe-450 to Ile-470.

It belongs to the TEX28 family. In terms of assembly, may form homodimers and heterodimers with TMCC2 or TMCC3 via the coiled-coil domains. Interacts with ribosomal proteins RPL4 and RPS6.

The protein resides in the endoplasmic reticulum membrane. This is Transmembrane and coiled-coil domain protein 3 from Mus musculus (Mouse).